Reading from the N-terminus, the 492-residue chain is MQTTSSQPRAIYYVVALQIWEYFSFYGMRALLILYLTNQLKYDDNHAYALFSAYCSLVYVTPILGGYLADKLLGNRMAVMLGALLMAIGHLVLGASETAPLFLYLSLAIIVCGYGLFKSNVSCLLGELYEPADPRRDGGFSLMYAAGNIGSIIAPIACGYVQEEYSWAMGFALAAIGMVAGLVIFLCGNRHFQHTAGVNRQALCARRFLLPNWGWLLVLLVTAPLLIAVLFWQEWSVYALIVATAIGLAVLARIYLRAETDKQRKDLRLIVVLTAFSLLFWAFAQQGGSSISLYIDRFVNRHIMSYEVPTAMFQSINAFAVMLCGMVLAWLVKESVNGNRTVRIWGKFALGLGLMSAGFCILTLSARWSAAYGQSSMPLMVLGLAVMGFAELFIDPVAMSQITRIEIPGVTGVLTGIYMLLSGAIANYLAGVIADQTSQASFDAAGAVNYSIDAYITVFSQITWGALACVGVVLVIWLYHSLKVRTRRLAVE.

The next 13 membrane-spanning stretches (helical) occupy residues 14–34, 49–69, 91–111, 138–158, 167–187, 212–232, 236–256, 269–289, 312–332, 344–364, 379–399, 413–433, and 458–478; these read VVALQIWEYFSFYGMRALLIL, ALFSAYCSLVYVTPILGGYLA, LVLGASETAPLFLYLSLAIIV, GGFSLMYAAGNIGSIIAPIAC, WAMGFALAAIGMVAGLVIFLC, NWGWLLVLLVTAPLLIAVLFW, SVYALIVATAIGLAVLARIYL, LIVVLTAFSLLFWAFAQQGGS, MFQSINAFAVMLCGMVLAWLV, IWGKFALGLGLMSAGFCILTL, LMVLGLAVMGFAELFIDPVAM, VLTGIYMLLSGAIANYLAGVI, and VFSQITWGALACVGVVLVIWL.

The protein belongs to the major facilitator superfamily. Proton-dependent oligopeptide transporter (POT/PTR) (TC 2.A.17) family. DtpD subfamily.

It localises to the cell inner membrane. In terms of biological role, probable proton-dependent permease that transports dipeptides. This Klebsiella pneumoniae subsp. pneumoniae (strain ATCC 700721 / MGH 78578) protein is Dipeptide permease D.